Reading from the N-terminus, the 303-residue chain is GMP synthase [glutamine-hydrolyzing] subunit B (303 aa).

A GMPS ATP-PPase domain is found at 1-183 (MDVEKFVENA…LGLPKEISER (183 aa)). Position 28-34 (28-34 (SGGVDSS)) interacts with ATP.

In terms of assembly, heterodimer composed of a glutamine amidotransferase subunit (A) and a GMP-binding subunit (B).

It catalyses the reaction XMP + L-glutamine + ATP + H2O = GMP + L-glutamate + AMP + diphosphate + 2 H(+). It participates in purine metabolism; GMP biosynthesis; GMP from XMP (L-Gln route): step 1/1. Functionally, catalyzes the synthesis of GMP from XMP. This is GMP synthase [glutamine-hydrolyzing] subunit B (guaAB) from Archaeoglobus fulgidus (strain ATCC 49558 / DSM 4304 / JCM 9628 / NBRC 100126 / VC-16).